Consider the following 446-residue polypeptide: Phosphoglucosamine mutase (446 aa).

S99 (phosphoserine intermediate) is an active-site residue. Mg(2+)-binding residues include S99, D242, D244, and D246. At S99 the chain carries Phosphoserine.

Belongs to the phosphohexose mutase family. Mg(2+) is required as a cofactor. Activated by phosphorylation.

The enzyme catalyses alpha-D-glucosamine 1-phosphate = D-glucosamine 6-phosphate. Its function is as follows. Catalyzes the conversion of glucosamine-6-phosphate to glucosamine-1-phosphate. The protein is Phosphoglucosamine mutase of Wolinella succinogenes (strain ATCC 29543 / DSM 1740 / CCUG 13145 / JCM 31913 / LMG 7466 / NCTC 11488 / FDC 602W) (Vibrio succinogenes).